The sequence spans 599 residues: Phosphomethylpyrimidine synthase (599 aa).

The span at 1–16 shows a compositional bias: polar residues; that stretch reads MSAASANSVTNPSAWE. Disordered stretches follow at residues 1–53 and 82–108; these read MSAA…PNDP and EDTE…GAAS. Residues 87–100 are compositionally biased toward basic and acidic residues; it reads YAGRERNLADDGRS. Residues Asn-192, Met-221, Tyr-250, His-286, 306–308, 347–350, and Glu-386 contribute to the substrate site; these read SRG and DGLR. His-390 contacts Zn(2+). Residue Tyr-413 participates in substrate binding. Residue His-454 coordinates Zn(2+). Residues Cys-534, Cys-537, and Cys-542 each contribute to the [4Fe-4S] cluster site.

This sequence belongs to the ThiC family. Requires [4Fe-4S] cluster as cofactor.

It catalyses the reaction 5-amino-1-(5-phospho-beta-D-ribosyl)imidazole + S-adenosyl-L-methionine = 4-amino-2-methyl-5-(phosphooxymethyl)pyrimidine + CO + 5'-deoxyadenosine + formate + L-methionine + 3 H(+). The protein operates within cofactor biosynthesis; thiamine diphosphate biosynthesis. Its function is as follows. Catalyzes the synthesis of the hydroxymethylpyrimidine phosphate (HMP-P) moiety of thiamine from aminoimidazole ribotide (AIR) in a radical S-adenosyl-L-methionine (SAM)-dependent reaction. The sequence is that of Phosphomethylpyrimidine synthase from Corynebacterium diphtheriae (strain ATCC 700971 / NCTC 13129 / Biotype gravis).